The sequence spans 59 residues: UPF0434 protein PBPRA2383 (59 aa).

It belongs to the UPF0434 family.

The sequence is that of UPF0434 protein PBPRA2383 from Photobacterium profundum (strain SS9).